We begin with the raw amino-acid sequence, 256 residues long: Chalcone--flavanone isomerase (256 aa).

3 residues coordinate substrate: Thr51, Asn116, and Ser193. Residues 219–256 (NSTTDLNESENEKLNSNEVSKEEKPLQVEKSAFKEVEV) are disordered. Residues 228–256 (ENEKLNSNEVSKEEKPLQVEKSAFKEVEV) are compositionally biased toward basic and acidic residues.

The protein belongs to the chalcone isomerase family. Nodules.

It catalyses the reaction a chalcone = a flavanone.. Its pathway is secondary metabolite biosynthesis; flavonoid biosynthesis. In terms of biological role, catalyzes the intramolecular cyclization of bicyclic chalcones into tricyclic (S)-flavanones. Responsible for the isomerization of 4,2',4',6'-tetrahydroxychalcone (also termed chalcone) into naringenin. The sequence is that of Chalcone--flavanone isomerase (CHI) from Elaeagnus umbellata (Autumn olive).